Here is a 125-residue protein sequence, read N- to C-terminus: Glycine cleavage system H protein (125 aa).

Positions Val23–Arg105 constitute a Lipoyl-binding domain. Lys64 carries the post-translational modification N6-lipoyllysine.

It belongs to the GcvH family. The glycine cleavage system is composed of four proteins: P, T, L and H. Requires (R)-lipoate as cofactor.

Its function is as follows. The glycine cleavage system catalyzes the degradation of glycine. The H protein shuttles the methylamine group of glycine from the P protein to the T protein. The chain is Glycine cleavage system H protein from Streptomyces coelicolor (strain ATCC BAA-471 / A3(2) / M145).